Consider the following 766-residue polypeptide: Hypoxia-inducible factor 1-alpha (766 aa).

Residues 1-26 (MDTGVVPEKKSRVSSDRRKEKSRDAA) form a disordered region. Basic and acidic residues predominate over residues 7–26 (PEKKSRVSSDRRKEKSRDAA). Residues 17–70 (RRKEKSRDAARCRRGKESEVFYELAQELPLPHSVTSNLDKASIMRLAISYLHMR) enclose the bHLH domain. 2 consecutive PAS domains span residues 82–159 (EERE…TSKK) and 230–300 (PHPS…FAKG). The region spanning 304 to 347 (TGQYRMLAKRGGFVWVETQATVIYNNKNSQPQCVVCVNYVLSGI) is the PAC domain. The tract at residues 361–383 (DMRPVKKELEEEESSEPEVSPVL) is disordered. P426 is subject to 4-hydroxyproline. The tract at residues 475-509 (DQHLVPNTSVDTTEVSTGPDSSSTPGSHSFTEPDS) is disordered. Residues 479-489 (VPNTSVDTTEV) are compositionally biased toward polar residues. The span at 490 to 503 (STGPDSSSTPGSHS) shows a compositional bias: low complexity. P559 bears the 4-hydroxyproline mark. The Nuclear localization signal signature appears at 718 to 721 (LLGI). N743 carries the post-translational modification (3S)-3-hydroxyasparagine.

As to quaternary structure, efficient DNA binding requires heterodimerization of an alpha and a beta/ARNT subunit. In normoxia, is hydroxylated on Pro-426 and Pro-559. The hydroxylated prolines promote interaction with VHL, initiating rapid ubiquitination and subsequent proteasomal degradation. Under hypoxia, proline hydroxylation is impaired and ubiquitination is attenuated, resulting in stabilization. In terms of processing, in normoxia, is hydroxylated on Asn-743, thus abrogating interaction with CREBBP and EP300 and preventing transcriptional activation. Post-translationally, the iron and 2-oxoglutarate dependent 3-hydroxylation of asparagine is (S) stereospecific within HIF CTAD domains.

It is found in the cytoplasm. Its subcellular location is the nucleus. The protein resides in the nucleus speckle. With respect to regulation, induced by reactive oxygen species (ROS). Its function is as follows. Functions as a master transcriptional regulator of the adaptive response to hypoxia. Under hypoxic conditions, activates the transcription of over 40 genes, including erythropoietin, glucose transporters, glycolytic enzymes, vascular endothelial growth factor, HILPDA, and other genes whose protein products increase oxygen delivery or facilitate metabolic adaptation to hypoxia. Plays an essential role in embryonic vascularization, tumor angiogenesis and pathophysiology of ischemic disease. This chain is Hypoxia-inducible factor 1-alpha (hif1a), found in Oncorhynchus mykiss (Rainbow trout).